The sequence spans 676 residues: WD repeat-containing protein 48 (676 aa).

Tyrosine 28 is subject to Phosphotyrosine. 8 WD repeats span residues 28–67, 73–112, 115–154, 166–205, 208–247, 250–289, 292–334, and 358–397; these read YNRN…QDPY, HHTD…CMST, THKD…ALTA, GNKD…KLMK, GHTD…CIAT, VHDE…IRVL, EEKA…NFRA, and KGGA…KVED. Lysine 214 carries the post-translational modification N6-acetyllysine. Lysine 578 is modified (N6-acetyllysine). A disordered region spans residues 607–628; it reads LDNESQTTSSSNNEKPEQEKEE. Positions 609–619 are enriched in low complexity; the sequence is NESQTTSSSNN. At threonine 613 the chain carries Phosphothreonine.

It belongs to the WD repeat WDR48 family. Interacts with USP46. Interacts with USP1. Interacts with USP12. Component of the USP12-WDR20-WDR48 deubiquitinating complex. Component of the USP12-DMWD-WDR48 deubiquitinating complex. Interacts with PHLPP1. Interacts with RAD51AP1; the interaction is direct and promotes formation of a trimeric complex with RAD51 via RAD51AP1. Interacts with ATAD5; the interaction regulates USP1-mediated PCNA deubiquitination. Interacts with RAD51; the interaction is enhanced under replication stress. Interacts with ITCH; the interaction is more efficient when both USP12 and WDR48/UAF1 are involved and may facilitate recruitment of the USP12 deubiquitinating complex to Notch.

Its subcellular location is the nucleus. The protein localises to the cytoplasm. It is found in the lysosome. The protein resides in the late endosome. Regulator of deubiquitinating complexes, which acts as a strong activator of USP1, USP12 and USP46. Enhances the USP1-mediated deubiquitination of FANCD2; USP1 being almost inactive by itself. Activates deubiquitination by increasing the catalytic turnover without increasing the affinity of deubiquitinating enzymes for the substrate. Also activates deubiquitinating activity of complexes containing USP12. Docks at the distal end of the USP12 fingers domain and induces a cascade of structural changes leading to the activation of the enzyme. Together with RAD51AP1, promotes DNA repair by stimulating RAD51-mediated homologous recombination. Binds single-stranded DNA (ssDNA) and double-stranded DNA (dsDNA). DNA-binding is required both for USP1-mediated deubiquitination of FANCD2 and stimulation of RAD51-mediated homologous recombination: both WDR48/UAF1 and RAD51AP1 have coordinated role in DNA-binding during these processes. Together with ATAD5 and by regulating USP1 activity, has a role in PCNA-mediated translesion synthesis (TLS) by deubiquitinating monoubiquitinated PCNA. Together with ATAD5, has a role in recruiting RAD51 to stalled forks during replication stress. This chain is WD repeat-containing protein 48 (Wdr48), found in Mus musculus (Mouse).